The primary structure comprises 1469 residues: ATP-binding cassette transporter abc4 (1469 aa).

Transmembrane regions (helical) follow at residues 21–40 (SLYY…FPTH), 55–74 (YSLE…RWIT), 94–114 (HGIL…FMFV), 121–141 (AFSD…LFLL), 160–180 (VLLN…PFFF), 189–209 (YSPF…IPLF), 296–316 (ILGM…SPIA), and 337–357 (WIVL…FYLF). Residues 296–580 (ILGMGVSSFM…IAYLMRQIVQ (285 aa)) enclose the ABC transmembrane type-1 1 domain. N-linked (GlcNAc...) asparagine glycosylation occurs at N386. The next 2 membrane-spanning stretches (helical) occupy residues 412-432 (EFIH…YLLQ) and 441-461 (VGLA…PLVA). A glycan (N-linked (GlcNAc...) asparagine) is linked at N510. Transmembrane regions (helical) follow at residues 524–544 (VLVE…FTTI) and 553–573 (IAFT…WIAY). An ABC transporter 1 domain is found at 611 to 840 (IGFFNASLTW…LAEQAASASE (230 aa)). The N-linked (GlcNAc...) asparagine glycan is linked to N615. 648 to 655 (GPTGSGKS) is an ATP binding site. 3 N-linked (GlcNAc...) asparagine glycosylation sites follow: N691, N790, and N815. Residues 894–914 (GFYVAAVLLFFVTTQATSILI) traverse the membrane as a helical segment. The ABC transmembrane type-1 2 domain occupies 897 to 1176 (VAAVLLFFVT…FVRSCNSLQA (280 aa)). N923 carries an N-linked (GlcNAc...) asparagine glycan. The chain crosses the membrane as a helical span at residues 936–956 (FLFVYGTMLLAYSLLDFLRTV). The N-linked (GlcNAc...) asparagine glycan is linked to N1007. The next 5 membrane-spanning stretches (helical) occupy residues 1009–1029 (SGWL…ILSV), 1033–1053 (MPIF…FGLL), 1065–1085 (ISIY…GVSV), 1120–1140 (VAVR…LIAL), and 1148–1168 (GVVG…LLFV). The ABC transporter 2 domain occupies 1214–1453 (FNHVSVSYSA…NGHFRRMCDG (240 aa)). An ATP-binding site is contributed by 1246–1253 (GRTGSGKS). N-linked (GlcNAc...) asparagine glycosylation occurs at N1355.

This sequence belongs to the ABC transporter superfamily. ABCC family. Conjugate transporter (TC 3.A.1.208) subfamily.

The protein localises to the vacuole membrane. It catalyses the reaction ATP + H2O + xenobioticSide 1 = ADP + phosphate + xenobioticSide 2.. In terms of biological role, involved in detoxification of xenobiotics, and vacuolar sequestration of glutathione S-conjugates. Together with abc2, required for accumulation of a red pigment (ade pigment) in the vacuole of a mutant affected in the adenine biosynthetic pathway. The protein is ATP-binding cassette transporter abc4 of Schizosaccharomyces pombe (strain 972 / ATCC 24843) (Fission yeast).